A 197-amino-acid polypeptide reads, in one-letter code: Proteinase inhibitor type-2 (197 aa).

The first 24 residues, 1-24 (MAVHKVSFVAHLLVLGMFLLLVDA), serve as a signal peptide directing secretion. A run of 3 repeats spans residues 24–80 (AKAC…DPKN), 81–140 (PNVC…DEPK), and 141–196 (SCTT…PQSA). 8 cysteine pairs are disulfide-bonded: cysteine 27–cysteine 115, cysteine 31–cysteine 111, cysteine 39–cysteine 121, cysteine 51–cysteine 88, cysteine 54–cysteine 72, cysteine 55–cysteine 84, cysteine 61–cysteine 97, and cysteine 114–cysteine 132.

This sequence belongs to the protease inhibitor I20 (potato type II proteinase inhibitor) family.

In Nicotiana tabacum (Common tobacco), this protein is Proteinase inhibitor type-2.